The primary structure comprises 500 residues: MEIQNNLYGIDLYTILPESILIFCLLTTLIIDLSLDSKNKSWIIYLNTIGLILSGLFLCLQWNGIIPVTPFPSFKGDSFSIAFRFCIIIASLLSLLLSIDYIKRAGVQLMEFVIFLLGATIGGMFLCGANDLITIFTSLECLGLSSYLLAGYSKQDIRSNEAAMKYLLVGGASSAILAYGFSWLYGLSGGKIILSEIVDGLIFADFVNPLIKWITLTCIIVGLGFKISAVPFHQWTPDVYEGSPTPVVAFLSVASKTAGLALTIRIIATIFPYLENEWQFLLQILACLTMIVGNLVAITQTSMKRMLAYSSISQAGYLMIGIISSTNDGYASSLVYMLIYIFMNLGAFGCVILFGLRTGTDQIRDFSGLYLKDPWLASCLTIFLLSLGGIPPFAGFFGKIYLFWSGWQAGLYILTFVGLLTSVISIYYYLRIIKIMFVREAKEFSSYVKNYVIPVNSLLPQSSVETAMIVCMIASSVMGIAINPIIQVAQKTILSTIPFI.

A run of 13 helical transmembrane segments spans residues 15-35, 42-62, 79-99, 109-129, 132-152, 167-187, 201-221, 247-267, 278-298, 306-326, 334-354, 377-397, and 400-420; these read ILPE…DLSL, WIIY…CLQW, FSIA…LLSI, LMEF…LCGA, LITI…LAGY, LLVG…LYGL, LIFA…CIIV, VVAF…IRII, WQFL…LVAI, MLAY…ISST, LVYM…VILF, ASCL…AGFF, and IYLF…VGLL.

This sequence belongs to the complex I subunit 2 family. As to quaternary structure, NDH is composed of at least 16 different subunits, 5 of which are encoded in the nucleus.

Its subcellular location is the plastid. The protein localises to the chloroplast thylakoid membrane. The enzyme catalyses a plastoquinone + NADH + (n+1) H(+)(in) = a plastoquinol + NAD(+) + n H(+)(out). It catalyses the reaction a plastoquinone + NADPH + (n+1) H(+)(in) = a plastoquinol + NADP(+) + n H(+)(out). Functionally, NDH shuttles electrons from NAD(P)H:plastoquinone, via FMN and iron-sulfur (Fe-S) centers, to quinones in the photosynthetic chain and possibly in a chloroplast respiratory chain. The immediate electron acceptor for the enzyme in this species is believed to be plastoquinone. Couples the redox reaction to proton translocation, and thus conserves the redox energy in a proton gradient. The chain is NAD(P)H-quinone oxidoreductase subunit 2, chloroplastic from Chaetosphaeridium globosum (Charophycean green alga).